Consider the following 201-residue polypeptide: Small ribosomal subunit protein uS4 (201 aa).

Positions 91–151 (SRLDNVVYRA…EKSRSMLWFE (61 aa)) constitute an S4 RNA-binding domain.

This sequence belongs to the universal ribosomal protein uS4 family. Part of the 30S ribosomal subunit. Contacts protein S5. The interaction surface between S4 and S5 is involved in control of translational fidelity.

In terms of biological role, one of the primary rRNA binding proteins, it binds directly to 16S rRNA where it nucleates assembly of the body of the 30S subunit. Its function is as follows. With S5 and S12 plays an important role in translational accuracy. This chain is Small ribosomal subunit protein uS4, found in Corynebacterium jeikeium (strain K411).